Here is a 359-residue protein sequence, read N- to C-terminus: 3-dehydroquinate synthase (359 aa).

NAD(+) is bound by residues 71–76, 105–109, 129–130, Lys142, Lys151, and 169–172; these read DGEQFK, GVIGD, TT, and CLHT. Zn(2+) is bound by residues Glu184, His247, and His264.

Belongs to the sugar phosphate cyclases superfamily. Dehydroquinate synthase family. Co(2+) is required as a cofactor. Requires Zn(2+) as cofactor. NAD(+) serves as cofactor.

Its subcellular location is the cytoplasm. The enzyme catalyses 7-phospho-2-dehydro-3-deoxy-D-arabino-heptonate = 3-dehydroquinate + phosphate. Its pathway is metabolic intermediate biosynthesis; chorismate biosynthesis; chorismate from D-erythrose 4-phosphate and phosphoenolpyruvate: step 2/7. Its function is as follows. Catalyzes the conversion of 3-deoxy-D-arabino-heptulosonate 7-phosphate (DAHP) to dehydroquinate (DHQ). This Shewanella sp. (strain W3-18-1) protein is 3-dehydroquinate synthase.